A 563-amino-acid chain; its full sequence is NAD-dependent malic enzyme (563 aa).

The active-site Proton donor is Tyr-101. Arg-154 contacts NAD(+). Catalysis depends on Lys-172, which acts as the Proton acceptor. 3 residues coordinate a divalent metal cation: Glu-243, Asp-244, and Asp-267. NAD(+) is bound by residues Asp-267 and Asn-416.

It belongs to the malic enzymes family. In terms of assembly, homotetramer. Requires Mg(2+) as cofactor. It depends on Mn(2+) as a cofactor.

The catalysed reaction is (S)-malate + NAD(+) = pyruvate + CO2 + NADH. It carries out the reaction oxaloacetate + H(+) = pyruvate + CO2. The chain is NAD-dependent malic enzyme from Pseudomonas syringae pv. tomato (strain ATCC BAA-871 / DC3000).